A 284-amino-acid chain; its full sequence is Probable tRNA-splicing endonuclease subunit sen34 (284 aa).

Active-site residues include Tyr-206, His-214, and Lys-245.

This sequence belongs to the tRNA-intron endonuclease family. As to quaternary structure, heterotetramer composed of sen2, sen15, sen34 and sen54. Interacts directly with sen15.

The catalysed reaction is pretRNA = a 3'-half-tRNA molecule with a 5'-OH end + a 5'-half-tRNA molecule with a 2',3'-cyclic phosphate end + an intron with a 2',3'-cyclic phosphate and a 5'-hydroxyl terminus.. Constitutes one of the two catalytic subunit of the tRNA-splicing endonuclease complex, a complex responsible for identification and cleavage of the splice sites in pre-tRNA. It cleaves pre-tRNA at the 5'- and 3'-splice sites to release the intron. The products are an intron and two tRNA half-molecules bearing 2',3'-cyclic phosphate and 5'-OH termini. There are no conserved sequences at the splice sites, but the intron is invariably located at the same site in the gene, placing the splice sites an invariant distance from the constant structural features of the tRNA body. It probably carries the active site for 3'-splice site cleavage. The protein is Probable tRNA-splicing endonuclease subunit sen34 (sen34) of Schizosaccharomyces pombe (strain 972 / ATCC 24843) (Fission yeast).